Here is a 230-residue protein sequence, read N- to C-terminus: Ribose-5-phosphate isomerase A (230 aa).

Residues 28-31, 83-86, and 97-100 contribute to the substrate site; these read TGST, DGAD, and KGLG. E106 acts as the Proton acceptor in catalysis. K124 contacts substrate.

The protein belongs to the ribose 5-phosphate isomerase family. Homodimer.

The enzyme catalyses aldehydo-D-ribose 5-phosphate = D-ribulose 5-phosphate. The protein operates within carbohydrate degradation; pentose phosphate pathway; D-ribose 5-phosphate from D-ribulose 5-phosphate (non-oxidative stage): step 1/1. In terms of biological role, catalyzes the reversible conversion of ribose-5-phosphate to ribulose 5-phosphate. This chain is Ribose-5-phosphate isomerase A, found in Gloeobacter violaceus (strain ATCC 29082 / PCC 7421).